Consider the following 237-residue polypeptide: Ribosomal RNA large subunit methyltransferase E (237 aa).

G76, W78, D99, D115, and D139 together coordinate S-adenosyl-L-methionine. Catalysis depends on K179, which acts as the Proton acceptor.

It belongs to the class I-like SAM-binding methyltransferase superfamily. RNA methyltransferase RlmE family.

The protein resides in the cytoplasm. It carries out the reaction uridine(2552) in 23S rRNA + S-adenosyl-L-methionine = 2'-O-methyluridine(2552) in 23S rRNA + S-adenosyl-L-homocysteine + H(+). Functionally, specifically methylates the uridine in position 2552 of 23S rRNA at the 2'-O position of the ribose in the fully assembled 50S ribosomal subunit. This chain is Ribosomal RNA large subunit methyltransferase E, found in Rhodopseudomonas palustris (strain TIE-1).